Consider the following 424-residue polypeptide: MDKFRVYGQSRLSGSVNISGAKNAALPILFAVILATEPVKLTNVPELKDIETTLNILRQLGVIANRDETGAVLLDASNINHFTAPYELVKTMRASIWALAPLVARFHQGQVSLPGGCSIGARPVDLHISGLEKLGADIVLEEGYVKAQVSDRLVGTRIVIEKVSVGATLSIMMAATLAKGTTVIENAAREPEIVDTADFLNKMGAKISGAGSDHITIEGVERLTGCEHSVVPDRIETGTFLIAAAISGGRVVCQNTKADTLDAVIDKLREAGAQVDVTENSITLDMLGNRPKAVNIRTAPHPGFPTDMQAQFTLLNMVAEGTSIITETIFENRFMHIPELIRMGGKAEIEGNTAVCHGVEQLSGTEVIATDLRASISLVLAGCIATGETIVDRIYHIDRGYEHIEDKLRGLGAKIERFSGSDEA.

22-23 (KN) is a binding site for phosphoenolpyruvate. A UDP-N-acetyl-alpha-D-glucosamine-binding site is contributed by Arg93. Cys117 (proton donor) is an active-site residue. Position 117 is a 2-(S-cysteinyl)pyruvic acid O-phosphothioketal (Cys117). UDP-N-acetyl-alpha-D-glucosamine-binding positions include 122–126 (RPVDL), 162–165 (KVSV), Asp307, and Ile329.

The protein belongs to the EPSP synthase family. MurA subfamily.

It is found in the cytoplasm. The catalysed reaction is phosphoenolpyruvate + UDP-N-acetyl-alpha-D-glucosamine = UDP-N-acetyl-3-O-(1-carboxyvinyl)-alpha-D-glucosamine + phosphate. Its pathway is cell wall biogenesis; peptidoglycan biosynthesis. Its function is as follows. Cell wall formation. Adds enolpyruvyl to UDP-N-acetylglucosamine. This chain is UDP-N-acetylglucosamine 1-carboxyvinyltransferase, found in Haemophilus influenzae (strain PittGG).